The chain runs to 377 residues: Alanine racemase (377 aa).

K37 acts as the Proton acceptor; specific for D-alanine in catalysis. K37 bears the N6-(pyridoxal phosphate)lysine mark. Residue R135 participates in substrate binding. Residue Y271 is the Proton acceptor; specific for L-alanine of the active site. Substrate is bound at residue M319.

It belongs to the alanine racemase family. Pyridoxal 5'-phosphate serves as cofactor.

The enzyme catalyses L-alanine = D-alanine. It participates in amino-acid biosynthesis; D-alanine biosynthesis; D-alanine from L-alanine: step 1/1. Functionally, catalyzes the interconversion of L-alanine and D-alanine. May also act on other amino acids. The sequence is that of Alanine racemase (alr) from Helicobacter acinonychis (strain Sheeba).